The following is a 142-amino-acid chain: Mitochondrial import inner membrane translocase subunit TIM22-4 (142 aa).

The next 4 helical transmembrane spans lie at 21 to 41 (VTSG…LGAL), 70 to 88 (SCKT…ECIV), 97 to 113 (TVNT…SMSA), and 120 to 137 (ACIG…IEKF).

This sequence belongs to the Tim17/Tim22/Tim23 family.

The protein localises to the mitochondrion inner membrane. Essential core component of the TIM22 complex, a complex that mediates the import and insertion of multi-pass transmembrane proteins into the mitochondrial inner membrane. The sequence is that of Mitochondrial import inner membrane translocase subunit TIM22-4 (TIM22-4) from Arabidopsis thaliana (Mouse-ear cress).